Reading from the N-terminus, the 353-residue chain is Green-sensitive opsin-2 (353 aa).

Residues 1-47 (MAAHEPVFAARRHNEDTTRESAFVYTNANNTRDPFEGPNYHIAPRWV) lie on the Extracellular side of the membrane. N-linked (GlcNAc...) asparagine glycosylation is present at N29. A helical transmembrane segment spans residues 48–72 (YNVSSLWMIFVVIASVFTNGLVIVA). Over 73–84 (TAKFKKLRHPLN) the chain is Cytoplasmic. The helical transmembrane segment at 85–110 (WILVNLAIADLGETVLASTISVINQI) threads the bilayer. Residues 111–124 (FGYFILGHPMCVFE) lie on the Extracellular side of the membrane. A disulfide bond links C121 and C198. The chain crosses the membrane as a helical span at residues 125–144 (GWTVSVCGITALWSLTIISW). The Cytoplasmic portion of the chain corresponds to 145 to 163 (ERWVVVCKPFGNVKFDGKW). A helical transmembrane segment spans residues 164–187 (AAGGIIFSWVWAIIWCTPPIFGWS). The Extracellular segment spans residues 188 to 213 (RYWPHGLKTSCGPDVFSGSEDPGVAS). Residues 214–241 (YMITLMLTCCILPLSIIIICYIFVWSAI) traverse the membrane as a helical segment. The Cytoplasmic portion of the chain corresponds to 242 to 263 (HQVAQQQKDSESTQKAEKEVSR). The chain crosses the membrane as a helical span at residues 264 to 287 (MVVVMILAFIVCWGPYASFATFSA). Residues 288 to 295 (VNPGYAWH) are Extracellular-facing. The chain crosses the membrane as a helical span at residues 296-320 (PLAAAMPAYFAKSATIYNPIIYVFM). Residue K307 is modified to N6-(retinylidene)lysine. At 321–353 (NRQFRSCIMQLFGKKVEDASEVSGSTTEVSTAS) the chain is on the cytoplasmic side.

It belongs to the G-protein coupled receptor 1 family. Opsin subfamily. As to expression, the color pigments are found in the cone photoreceptor cells.

The protein localises to the membrane. In terms of biological role, visual pigments are the light-absorbing molecules that mediate vision. They consist of an apoprotein, opsin, covalently linked to cis-retinal. This Psalidodon fasciatus (Banded astyanax) protein is Green-sensitive opsin-2 (G101).